The primary structure comprises 240 residues: Ribosomal RNA small subunit methyltransferase G (240 aa).

Residues Gly-79, 130–131 (AE), and Arg-149 contribute to the S-adenosyl-L-methionine site.

It belongs to the methyltransferase superfamily. RNA methyltransferase RsmG family.

The protein resides in the cytoplasm. In terms of biological role, specifically methylates the N7 position of a guanine in 16S rRNA. This is Ribosomal RNA small subunit methyltransferase G from Moorella thermoacetica (strain ATCC 39073 / JCM 9320).